A 288-amino-acid chain; its full sequence is Male determiner protein Nix (288 aa).

RRM domains lie at 19-94 (YCIY…LPLS), 108-179 (IVVY…KVER), and 205-282 (RSIG…FVPE).

Its function is as follows. Male determiner protein (M-factor) that controls male somatic sexual differentiation. Acts as a dominant factor that regulates the mRNA splicing of doublesex (dsx) or fruitless (fru) transcripts and promotes expression of male splice forms of dsx and fru. This Aedes aegypti (Yellowfever mosquito) protein is Male determiner protein Nix.